The chain runs to 261 residues: Kallikrein-2 (261 aa).

An N-terminal signal peptide occupies residues 1–18 (MWDLVLSIALSVGCTGAV). Positions 19–24 (PLIQSR) are cleaved as a propeptide — activation peptide. Residues 25–258 (IVGGWECEKH…YRKWIKDTIA (234 aa)) enclose the Peptidase S1 domain. Disulfide bonds link C31–C173, C50–C66, C152–C219, C184–C198, and C209–C234. H65 (charge relay system) is an active-site residue. The N-linked (GlcNAc...) asparagine glycan is linked to N102. D120 functions as the Charge relay system in the catalytic mechanism. S213 acts as the Charge relay system in catalysis.

It belongs to the peptidase S1 family. Kallikrein subfamily.

It catalyses the reaction Preferential cleavage of Arg-|-Xaa bonds in small molecule substrates. Highly selective action to release kallidin (lysyl-bradykinin) from kininogen involves hydrolysis of Met-|-Xaa or Leu-|-Xaa.. Its function is as follows. Glandular kallikreins cleave Met-Lys and Arg-Ser bonds in kininogen to release Lys-bradykinin. The chain is Kallikrein-2 (KLK2) from Homo sapiens (Human).